Consider the following 187-residue polypeptide: Transcription antitermination protein NusB (187 aa).

The tract at residues 135-187 is disordered; it reads APAPESVAEEADEESSDSDAAASDPTDEGDVSDSSGASDEPAAPSAEIQPTVD. A compositionally biased stretch (acidic residues) spans 141–151; it reads VAEEADEESSD.

It belongs to the NusB family.

Its function is as follows. Involved in transcription antitermination. Required for transcription of ribosomal RNA (rRNA) genes. Binds specifically to the boxA antiterminator sequence of the ribosomal RNA (rrn) operons. The protein is Transcription antitermination protein NusB of Bifidobacterium longum subsp. infantis (strain ATCC 15697 / DSM 20088 / JCM 1222 / NCTC 11817 / S12).